The chain runs to 106 residues: Cell division protein FtsL (106 aa).

The Cytoplasmic segment spans residues 1–22; sequence MPRQSPPNLAKLIALDLLTVGR. Residues 23 to 43 form a helical membrane-spanning segment; it reads VPLLLLVLIFSCAMGVVFMTH. Residues 44–106 are Periplasmic-facing; that stretch reads HTRQAISAKD…SDKEVVINLK (63 aa).

This sequence belongs to the FtsL family. Part of a complex composed of FtsB, FtsL and FtsQ.

The protein resides in the cell inner membrane. In terms of biological role, essential cell division protein. May link together the upstream cell division proteins, which are predominantly cytoplasmic, with the downstream cell division proteins, which are predominantly periplasmic. This Vibrio cholerae serotype O1 (strain ATCC 39315 / El Tor Inaba N16961) protein is Cell division protein FtsL.